Reading from the N-terminus, the 540-residue chain is Chaperonin GroEL (540 aa).

ATP contacts are provided by residues threonine 29–proline 32, aspartate 86–threonine 90, glycine 413, aspartate 478–leucine 480, and aspartate 494.

The protein belongs to the chaperonin (HSP60) family. As to quaternary structure, forms a cylinder of 14 subunits composed of two heptameric rings stacked back-to-back. Interacts with the co-chaperonin GroES.

The protein resides in the cytoplasm. The enzyme catalyses ATP + H2O + a folded polypeptide = ADP + phosphate + an unfolded polypeptide.. Together with its co-chaperonin GroES, plays an essential role in assisting protein folding. The GroEL-GroES system forms a nano-cage that allows encapsulation of the non-native substrate proteins and provides a physical environment optimized to promote and accelerate protein folding. This chain is Chaperonin GroEL, found in Clostridioides difficile (Peptoclostridium difficile).